Consider the following 1059-residue polypeptide: Cellulose synthase catalytic subunit A [UDP-forming] (1059 aa).

Disordered regions lie at residues 1–159 (MDRN…RFDT) and 174–220 (MRQH…KHVA). Residues 15 to 36 (NNINSSGGSYNNSMNNSSNNIG) show a composition bias toward low complexity. Composition is skewed to polar residues over residues 40–57 (GNNQ…QSNL) and 142–154 (NSPS…TSGG). A compositionally biased stretch (low complexity) spans 181–194 (QEQQQQQQQQQQQQ). Residues 204 to 219 (QKKKPSSMQLSKKKHV) show a composition bias toward basic residues. 3 consecutive transmembrane segments (helical) span residues 246 to 266 (FSHA…IFYF), 280 to 300 (ITFS…LGSA), and 306 to 323 (FTNP…QILA). Residues 328–628 (KHPTVMMYVC…FLGLLDADQQ (301 aa)) are catalytic subdomain A. Residue D370 is part of the active site. Residues D624 and D626 each coordinate substrate. The segment at 701–761 (QPLYDIGGIM…EQRKRWAQGA (61 aa)) is catalytic subdomain B. D717 is an active-site residue. Helical transmembrane passes span 790 to 810 (IYPF…IMSI) and 813 to 833 (VPIV…PVMV). Positions 933-953 (DNAQESSGKHKAEQSFRTSNK) are disordered. The span at 939–953 (SGKHKAEQSFRTSNK) shows a compositional bias: basic and acidic residues. 3 helical membrane-spanning segments follow: residues 963 to 983 (LFLP…SAVL), 993 to 1013 (WLLV…WSFI), and 1035 to 1055 (IVLF…KVCI).

Belongs to the glycosyltransferase 2 family. Requires Mg(2+) as cofactor.

Its subcellular location is the membrane. The catalysed reaction is [(1-&gt;4)-beta-D-glucosyl](n) + UDP-alpha-D-glucose = [(1-&gt;4)-beta-D-glucosyl](n+1) + UDP + H(+). It participates in glycan metabolism; amoeba cellulose biosynthesis. Its function is as follows. Catalytic subunit of cellulose synthase. It incorporates glucose from uridine 5'-diphosphate glucose (UDP-alpha-D-glucose) to cellulose (a (1-&gt;4)-beta-D-glucan), which is produced as an extracellular component for mechanical and chemical protection at the onset of the stalk formation, when the cells exhibit multicellular behavior during culmination. The polypeptide is Cellulose synthase catalytic subunit A [UDP-forming] (dcsA) (Dictyostelium discoideum (Social amoeba)).